Here is a 236-residue protein sequence, read N- to C-terminus: N-alpha-acetyltransferase 40 (236 aa).

Residue glycine 2 is the site of N-myristoyl glycine attachment. The N-acetyltransferase domain occupies 63–217 (SDLDQKTIDW…DCTYEILSKR (155 aa)). Substrate contacts are provided by residues tyrosine 85, 127-129 (DVE), and tyrosine 138. Acetyl-CoA is bound by residues 140 to 142 (VQL) and 148 to 153 (RKGVGK). Threonine 174 lines the substrate pocket. Asparagine 179 lines the acetyl-CoA pocket. Tyrosine 211 serves as a coordination point for substrate.

It belongs to the acetyltransferase family. NAA40 subfamily.

It is found in the cytoplasm. Its subcellular location is the nucleus. It catalyses the reaction N-terminal L-seryl-[histone H4] + acetyl-CoA = N-terminal N(alpha)-acetyl-L-seryl-[histone H4] + CoA + H(+). The catalysed reaction is N-terminal L-seryl-[histone H2A] + acetyl-CoA = N-terminal N(alpha)-acetyl-L-seryl-[histone H2A] + CoA + H(+). In terms of biological role, N-alpha-acetyltransferase that specifically mediates the acetylation of the N-terminal residues of histones H4 and H2A. In contrast to other N-alpha-acetyltransferase, has a very specific selectivity for histones H4 and H2A N-terminus and specifically recognizes the 'Ser-Gly-Arg-Gly sequence'. This chain is N-alpha-acetyltransferase 40 (naa40), found in Xenopus laevis (African clawed frog).